A 250-amino-acid polypeptide reads, in one-letter code: Small ribosomal subunit protein uS2 (250 aa).

The protein belongs to the universal ribosomal protein uS2 family.

This chain is Small ribosomal subunit protein uS2, found in Delftia acidovorans (strain DSM 14801 / SPH-1).